Reading from the N-terminus, the 386-residue chain is Acetylornithine aminotransferase (386 aa).

Pyridoxal 5'-phosphate is bound by residues 96 to 97 (GA) and Phe123. Arg126 provides a ligand contact to N(2)-acetyl-L-ornithine. Residue 208 to 211 (DEVQ) participates in pyridoxal 5'-phosphate binding. An N6-(pyridoxal phosphate)lysine modification is found at Lys237. Position 265 (Ser265) interacts with N(2)-acetyl-L-ornithine. Thr266 is a binding site for pyridoxal 5'-phosphate.

It belongs to the class-III pyridoxal-phosphate-dependent aminotransferase family. ArgD subfamily. In terms of assembly, homodimer. Requires pyridoxal 5'-phosphate as cofactor.

It localises to the cytoplasm. The enzyme catalyses N(2)-acetyl-L-ornithine + 2-oxoglutarate = N-acetyl-L-glutamate 5-semialdehyde + L-glutamate. The protein operates within amino-acid biosynthesis; L-arginine biosynthesis; N(2)-acetyl-L-ornithine from L-glutamate: step 4/4. The sequence is that of Acetylornithine aminotransferase from Bacillus anthracis.